A 367-amino-acid polypeptide reads, in one-letter code: Glutamate 5-kinase (367 aa).

Lysine 10 is an ATP binding site. 3 residues coordinate substrate: serine 50, aspartate 137, and asparagine 149. Residues 169–170 and 211–217 each bind ATP; these read TD and TGGMATK. The PUA domain occupies 275–353; it reads AGEITVDDGA…QQISEILGYE (79 aa).

Belongs to the glutamate 5-kinase family.

It localises to the cytoplasm. The enzyme catalyses L-glutamate + ATP = L-glutamyl 5-phosphate + ADP. It functions in the pathway amino-acid biosynthesis; L-proline biosynthesis; L-glutamate 5-semialdehyde from L-glutamate: step 1/2. Functionally, catalyzes the transfer of a phosphate group to glutamate to form L-glutamate 5-phosphate. The chain is Glutamate 5-kinase from Yersinia pseudotuberculosis serotype IB (strain PB1/+).